Reading from the N-terminus, the 58-residue chain is UPF0391 membrane protein VP0082 (58 aa).

The next 2 membrane-spanning stretches (helical) occupy residues 4-24 and 30-50; these read WMFI…SGIA and VAQV…VFVI.

This sequence belongs to the UPF0391 family.

The protein localises to the cell membrane. This is UPF0391 membrane protein VP0082 from Vibrio parahaemolyticus serotype O3:K6 (strain RIMD 2210633).